The chain runs to 66 residues: UPF0337 protein pc0632 (66 aa).

Belongs to the UPF0337 (CsbD) family.

The chain is UPF0337 protein pc0632 from Protochlamydia amoebophila (strain UWE25).